A 989-amino-acid polypeptide reads, in one-letter code: Translation initiation factor IF-2 (989 aa).

Disordered stretches follow at residues 43–219 (KRRR…LQAR) and 234–379 (EARR…GGAR). Over residues 72 to 87 (NTPNKDTAVTQTATKN) the composition is skewed to polar residues. Low complexity predominate over residues 105–146 (PKPVAAEATAQETSKAAPAAAQPVAEKEAAAPASAEAAKSAA). Residues 149–159 (VTDRGAKKTTE) are compositionally biased toward basic and acidic residues. The span at 160-171 (KNGANASGNRPS) shows a compositional bias: polar residues. A compositionally biased stretch (basic and acidic residues) spans 234-293 (EARRREDRLKQEADLEEQRRIEEKRRLEAEAKVEAEKQAALKEKEKAEAKARAKAEKEAK). Residues 294 to 303 (AAQAKTAGAA) show a composition bias toward low complexity. Positions 342-361 (PRREAPRPAMRDRKGEDRRQ) are enriched in basic and acidic residues. The region spanning 489–659 (SRPPVVTIMG…LLQAEMLELK (171 aa)) is the tr-type G domain. The segment at 498 to 505 (GHVDHGKT) is G1. 498 to 505 (GHVDHGKT) provides a ligand contact to GTP. The tract at residues 523–527 (GITQH) is G2. The segment at 545–548 (DTPG) is G3. Residues 545 to 549 (DTPGH) and 599 to 602 (NKMD) contribute to the GTP site. Residues 599–602 (NKMD) are G4. The segment at 635–637 (SAA) is G5.

The protein belongs to the TRAFAC class translation factor GTPase superfamily. Classic translation factor GTPase family. IF-2 subfamily.

It is found in the cytoplasm. Its function is as follows. One of the essential components for the initiation of protein synthesis. Protects formylmethionyl-tRNA from spontaneous hydrolysis and promotes its binding to the 30S ribosomal subunits. Also involved in the hydrolysis of GTP during the formation of the 70S ribosomal complex. This chain is Translation initiation factor IF-2, found in Zymomonas mobilis subsp. mobilis (strain ATCC 31821 / ZM4 / CP4).